Reading from the N-terminus, the 218-residue chain is Hypoxanthine-guanine phosphoribosyltransferase (218 aa).

A2 is subject to N-acetylalanine. K69 is a GMP binding site. N6-acetyllysine is present on K103. Residue K115 forms a Glycyl lysine isopeptide (Lys-Gly) (interchain with G-Cter in SUMO1); alternate linkage. K115 is covalently cross-linked (Glycyl lysine isopeptide (Lys-Gly) (interchain with G-Cter in SUMO2); alternate). Residues 134 to 142, K166, 186 to 188, and D194 contribute to the GMP site; these read EDIIDTGKT and KFV. D138 functions as the Proton acceptor in the catalytic mechanism. T142 is subject to Phosphothreonine. Residue D194 coordinates Mg(2+).

It belongs to the purine/pyrimidine phosphoribosyltransferase family. Homotetramer. Mg(2+) is required as a cofactor.

The protein localises to the cytoplasm. It carries out the reaction IMP + diphosphate = hypoxanthine + 5-phospho-alpha-D-ribose 1-diphosphate. The catalysed reaction is GMP + diphosphate = guanine + 5-phospho-alpha-D-ribose 1-diphosphate. It participates in purine metabolism; IMP biosynthesis via salvage pathway; IMP from hypoxanthine: step 1/1. Converts guanine to guanosine monophosphate, and hypoxanthine to inosine monophosphate. Transfers the 5-phosphoribosyl group from 5-phosphoribosylpyrophosphate onto the purine. Plays a central role in the generation of purine nucleotides through the purine salvage pathway. This Cricetulus griseus (Chinese hamster) protein is Hypoxanthine-guanine phosphoribosyltransferase (HPRT1).